Consider the following 485-residue polypeptide: Delta(14)-sterol reductase ERG24A (485 aa).

4 helical membrane-spanning segments follow: residues 18-38 (FFGP…VYVF), 77-97 (GLVS…SLIL), 131-151 (LAVL…WTFM), and 155-175 (FIQI…FVYV). A glycan (N-linked (GlcNAc...) asparagine) is linked at Asn-240. 4 helical membrane-spanning segments follow: residues 259 to 279 (ILIT…EPAI), 285 to 305 (ITTD…VPYV), 319 to 339 (SLGP…FYIF), and 431 to 451 (AQGW…ILLI).

Belongs to the ERG4/ERG24 family.

The protein resides in the endoplasmic reticulum membrane. It carries out the reaction 4,4-dimethyl-5alpha-cholesta-8,24-dien-3beta-ol + NADP(+) = 4,4-dimethyl-5alpha-cholesta-8,14,24-trien-3beta-ol + NADPH + H(+). It participates in steroid metabolism; ergosterol biosynthesis. Delta(14)-sterol reductase; part of the third module of ergosterol biosynthesis pathway that includes the late steps of the pathway. Catalyzes the reduction of the C14=C15 double bond within 4,4,24-trimethyl ergosta-8,14,24(28)-trienolto produce 4,4-dimethylfecosterol. The third module or late pathway involves the ergosterol synthesis itself through consecutive reactions that mainly occur in the endoplasmic reticulum (ER) membrane. Firstly, the squalene synthase ERG9 catalyzes the condensation of 2 farnesyl pyrophosphate moieties to form squalene, which is the precursor of all steroids. Squalene synthase is crucial for balancing the incorporation of farnesyl diphosphate (FPP) into sterol and nonsterol isoprene synthesis. Secondly, squalene is converted into lanosterol by the consecutive action of the squalene epoxidase ERG1 and the lanosterol synthase ERG7. Then, the delta(24)-sterol C-methyltransferase ERG6 methylates lanosterol at C-24 to produce eburicol. Eburicol is the substrate of the sterol 14-alpha demethylase encoded by CYP51A, CYP51B and CYP51C, to yield 4,4,24-trimethyl ergosta-8,14,24(28)-trienol. CYP51B encodes the enzyme primarily responsible for sterol 14-alpha-demethylation, and plays an essential role in ascospore formation. CYP51A encodes an additional sterol 14-alpha-demethylase, induced on ergosterol depletion and responsible for the intrinsic variation in azole sensitivity. The third CYP51 isoform, CYP51C, does not encode a sterol 14-alpha-demethylase, but is required for full virulence on host wheat ears. The C-14 reductase ERG24 then reduces the C14=C15 double bond which leads to 4,4-dimethylfecosterol. A sequence of further demethylations at C-4, involving the C-4 demethylation complex containing the C-4 methylsterol oxidases ERG25, the sterol-4-alpha-carboxylate 3-dehydrogenase ERG26 and the 3-keto-steroid reductase ERG27, leads to the production of fecosterol via 4-methylfecosterol. ERG28 has a role as a scaffold to help anchor ERG25, ERG26 and ERG27 to the endoplasmic reticulum. The C-8 sterol isomerase ERG2 then catalyzes the reaction which results in unsaturation at C-7 in the B ring of sterols and thus converts fecosterol to episterol. The sterol-C5-desaturases ERG3A and ERG3BB then catalyze the introduction of a C-5 double bond in the B ring to produce 5-dehydroepisterol. The C-22 sterol desaturases ERG5A and ERG5B further convert 5-dehydroepisterol into ergosta-5,7,22,24(28)-tetraen-3beta-ol by forming the C-22(23) double bond in the sterol side chain. Finally, ergosta-5,7,22,24(28)-tetraen-3beta-ol is substrate of the C-24(28) sterol reductase ERG4 to produce ergosterol. In Gibberella zeae (strain ATCC MYA-4620 / CBS 123657 / FGSC 9075 / NRRL 31084 / PH-1) (Wheat head blight fungus), this protein is Delta(14)-sterol reductase ERG24A.